A 181-amino-acid chain; its full sequence is Adenylate kinase (181 aa).

Residue 10–15 (GAGKGT) coordinates ATP. The tract at residues 30–59 (STGELFRRNIEEGTKLGVEAKRYLDAGDLV) is NMP. AMP-binding positions include threonine 31, arginine 36, 57–59 (DLV), 85–88 (GYPR), and glutamine 92. The interval 126–132 (GRGRADD) is LID. Arginine 127 is a binding site for ATP. Positions 129 and 140 each coordinate AMP. Glycine 166 is a binding site for ATP.

This sequence belongs to the adenylate kinase family. In terms of assembly, monomer.

It localises to the cytoplasm. It carries out the reaction AMP + ATP = 2 ADP. It participates in purine metabolism; AMP biosynthesis via salvage pathway; AMP from ADP: step 1/1. Catalyzes the reversible transfer of the terminal phosphate group between ATP and AMP. Plays an important role in cellular energy homeostasis and in adenine nucleotide metabolism. The protein is Adenylate kinase of Mycobacterium tuberculosis (strain ATCC 25177 / H37Ra).